A 393-amino-acid chain; its full sequence is tRNA(Met) cytidine acetate ligase (393 aa).

The ATP site is built by glycine 81, asparagine 142, and arginine 167.

Belongs to the TmcAL family.

The protein resides in the cytoplasm. The enzyme catalyses cytidine(34) in elongator tRNA(Met) + acetate + ATP = N(4)-acetylcytidine(34) in elongator tRNA(Met) + AMP + diphosphate. Its function is as follows. Catalyzes the formation of N(4)-acetylcytidine (ac(4)C) at the wobble position of elongator tRNA(Met), using acetate and ATP as substrates. First activates an acetate ion to form acetyladenylate (Ac-AMP) and then transfers the acetyl group to tRNA to form ac(4)C34. The sequence is that of tRNA(Met) cytidine acetate ligase from Bacillus thuringiensis subsp. konkukian (strain 97-27).